Reading from the N-terminus, the 247-residue chain is Hydroxyacylglutathione hydrolase 1 (247 aa).

Zn(2+)-binding residues include H54, H56, D58, H59, H111, D128, and H165.

This sequence belongs to the metallo-beta-lactamase superfamily. Glyoxalase II family. As to quaternary structure, monomer. Requires Zn(2+) as cofactor.

The catalysed reaction is an S-(2-hydroxyacyl)glutathione + H2O = a 2-hydroxy carboxylate + glutathione + H(+). It functions in the pathway secondary metabolite metabolism; methylglyoxal degradation; (R)-lactate from methylglyoxal: step 2/2. Thiolesterase that catalyzes the hydrolysis of S-D-lactoyl-glutathione to form glutathione and D-lactic acid. This Vibrio vulnificus (strain YJ016) protein is Hydroxyacylglutathione hydrolase 1.